We begin with the raw amino-acid sequence, 230 residues long: MPIYQLIDELVFPPLDHAEPGGLLAVGGDLSPRRLLLAYSMGIFPWFNADDPILWWSPDPRCVLALSAFYLNRSLSKELRRGRYEVTFDKAFSEVIRACARTPRKEGPGTWITGDMLKAYELLHGLGYAHSVEAWYEGCLVGGLYGVALGGCFFGESMFHCMPNASKVAFATLVRHLAMLGYHLIDCQQSSRHLLSMGATEVPRAEFLQLLQNAGVHPSTLPPKGKFPSR.

The protein belongs to the L/F-transferase family.

The protein localises to the cytoplasm. The catalysed reaction is N-terminal L-lysyl-[protein] + L-leucyl-tRNA(Leu) = N-terminal L-leucyl-L-lysyl-[protein] + tRNA(Leu) + H(+). It catalyses the reaction N-terminal L-arginyl-[protein] + L-leucyl-tRNA(Leu) = N-terminal L-leucyl-L-arginyl-[protein] + tRNA(Leu) + H(+). The enzyme catalyses L-phenylalanyl-tRNA(Phe) + an N-terminal L-alpha-aminoacyl-[protein] = an N-terminal L-phenylalanyl-L-alpha-aminoacyl-[protein] + tRNA(Phe). In terms of biological role, functions in the N-end rule pathway of protein degradation where it conjugates Leu, Phe and, less efficiently, Met from aminoacyl-tRNAs to the N-termini of proteins containing an N-terminal arginine or lysine. The chain is Leucyl/phenylalanyl-tRNA--protein transferase from Syntrophotalea carbinolica (strain DSM 2380 / NBRC 103641 / GraBd1) (Pelobacter carbinolicus).